A 257-amino-acid polypeptide reads, in one-letter code: Triosephosphate isomerase, cytosolic (257 aa).

Substrate is bound by residues N10 and K12. H96 (electrophile) is an active-site residue. E167 serves as the catalytic Proton acceptor.

This sequence belongs to the triosephosphate isomerase family. Homodimer. Higher levels found in leaves than in roots.

It localises to the cytoplasm. The enzyme catalyses D-glyceraldehyde 3-phosphate = dihydroxyacetone phosphate. Its pathway is carbohydrate biosynthesis; gluconeogenesis. The protein operates within carbohydrate degradation; glycolysis; D-glyceraldehyde 3-phosphate from glycerone phosphate: step 1/1. The polypeptide is Triosephosphate isomerase, cytosolic (TPI) (Stellaria longipes (Longstalk starwort)).